The following is a 282-amino-acid chain: Pseudokinase OPG198 (282 aa).

Positions 1 and 30 each coordinate ATP. Residues 1-282 enclose the Protein kinase domain; that stretch reads MESFKYCFDN…DRLRRLFIQD (282 aa).

This sequence belongs to the protein kinase superfamily. Ser/Thr protein kinase family. Poxviruses subfamily. Interacts with B1/VPK1. Interacts with host VRK1. Interacts with host VRK2.

The protein resides in the host nucleus. With respect to regulation, both catalytically active kinases B1/VPK1 and host VRK2 repress B12 inhibitory activity in a B1/VPK1 deletion mutant strain. Pseudokinase that plays a role in viral DNA replication repression by activating the antiviral protein BANF1 and inhibiting the activity of host VRK1, a cellular modulator of BANF1. The sequence is that of Pseudokinase OPG198 (OPG198) from Cynomys gunnisoni (Gunnison's prairie dog).